The sequence spans 316 residues: Phosphoribosylaminoimidazole-succinocarboxamide synthase (316 aa).

It belongs to the SAICAR synthetase family.

It catalyses the reaction 5-amino-1-(5-phospho-D-ribosyl)imidazole-4-carboxylate + L-aspartate + ATP = (2S)-2-[5-amino-1-(5-phospho-beta-D-ribosyl)imidazole-4-carboxamido]succinate + ADP + phosphate + 2 H(+). Its pathway is purine metabolism; IMP biosynthesis via de novo pathway; 5-amino-1-(5-phospho-D-ribosyl)imidazole-4-carboxamide from 5-amino-1-(5-phospho-D-ribosyl)imidazole-4-carboxylate: step 1/2. The sequence is that of Phosphoribosylaminoimidazole-succinocarboxamide synthase from Flavobacterium psychrophilum (strain ATCC 49511 / DSM 21280 / CIP 103535 / JIP02/86).